Consider the following 95-residue polypeptide: QLYDIGARAAFPSQPSPYGMTSQGQTNLPQQVQPQLVSETISSIKCIYIGQNDLTGYAGVIDGQTAGASACSDPQNYVKALAYGILGGTNLNSYK.

The chain is Nodulin from Striga hermonthica (Purple witchweed).